The chain runs to 121 residues: MEYLLQEYLPILVFLGMASALAIVLILAAAVIAVRNPDPEKVSAYECGFNAFDDARMKFDVRFYLVSILFIIFDLEVAFLFPWAVSFASLSDVAFWGLMVFLAVLTVGFAYEWKKGALEWA.

Helical transmembrane passes span 11–31, 65–85, and 93–113; these read ILVFLGMASALAIVLILAAAV, LVSILFIIFDLEVAFLFPWAV, and VAFWGLMVFLAVLTVGFAYEW.

It belongs to the complex I subunit 3 family. NDH-1 is composed of at least 14 different subunits, Nqo1 to Nqo14. The complex has a L-shaped structure, with the hydrophobic arm (subunits Nqo7, Nqo8, Nqo10 to Nqo14) embedded in the inner membrane and the hydrophilic peripheral arm (subunits Nqo1 to Nqo6, Nqo9) protruding into the bacterial cytoplasm. The hydrophilic domain contains all the redox centers.

It localises to the cell inner membrane. The enzyme catalyses a quinone + NADH + 5 H(+)(in) = a quinol + NAD(+) + 4 H(+)(out). Functionally, NDH-1 shuttles electrons from NADH, via FMN and iron-sulfur (Fe-S) centers, to quinones in the respiratory chain. The immediate electron acceptor for the enzyme in this species is believed to be ubiquinone. Couples the redox reaction to proton translocation (for every two electrons transferred, four hydrogen ions are translocated across the cytoplasmic membrane), and thus conserves the redox energy in a proton gradient. The chain is NADH-quinone oxidoreductase subunit 7 (nqo7) from Paracoccus denitrificans.